A 166-amino-acid polypeptide reads, in one-letter code: Small ribosomal subunit protein uS5 (166 aa).

The S5 DRBM domain occupies 11–74 (LQEKLIAVNR…EKARRNMINV (64 aa)).

This sequence belongs to the universal ribosomal protein uS5 family. As to quaternary structure, part of the 30S ribosomal subunit. Contacts proteins S4 and S8.

Its function is as follows. With S4 and S12 plays an important role in translational accuracy. Functionally, located at the back of the 30S subunit body where it stabilizes the conformation of the head with respect to the body. This Actinobacillus pleuropneumoniae serotype 5b (strain L20) protein is Small ribosomal subunit protein uS5.